A 96-amino-acid polypeptide reads, in one-letter code: Small ribosomal subunit protein bS6 (96 aa).

The protein belongs to the bacterial ribosomal protein bS6 family.

Functionally, binds together with bS18 to 16S ribosomal RNA. The chain is Small ribosomal subunit protein bS6 from Streptococcus pyogenes serotype M1.